The following is a 226-amino-acid chain: NAD(P)H-hydrate epimerase (226 aa).

The 206-residue stretch at 10-215 (AIELDLDLFE…ALQRKYQLNL (206 aa)) folds into the YjeF N-terminal domain. 58–62 (NNGGD) contributes to the (6S)-NADPHX binding site. Residues N59 and D123 each contribute to the K(+) site. (6S)-NADPHX-binding positions include 127–133 (GFGFKPP) and D156. K(+) is bound at residue S159.

The protein belongs to the NnrE/AIBP family. K(+) serves as cofactor.

It catalyses the reaction (6R)-NADHX = (6S)-NADHX. The catalysed reaction is (6R)-NADPHX = (6S)-NADPHX. Its function is as follows. Catalyzes the epimerization of the S- and R-forms of NAD(P)HX, a damaged form of NAD(P)H that is a result of enzymatic or heat-dependent hydration. This is a prerequisite for the S-specific NAD(P)H-hydrate dehydratase to allow the repair of both epimers of NAD(P)HX. The protein is NAD(P)H-hydrate epimerase of Drosophila pseudoobscura pseudoobscura (Fruit fly).